Consider the following 651-residue polypeptide: Probable endo-1,3(4)-beta-glucanase NFIA_089530 (651 aa).

Residues 1-21 form the signal peptide; that stretch reads MAPSSLFLSVGSLIASSLVSA. Positions 36-289 constitute a GH16 domain; it reads ESWQGESFIN…WAGNVFAEST (254 aa). A glycan (N-linked (GlcNAc...) asparagine) is linked at Asn-64. Glu-145 serves as the catalytic Nucleophile. Glu-150 (proton donor) is an active-site residue. A glycan (N-linked (GlcNAc...) asparagine) is linked at Asn-200. The span at 364–378 shows a compositional bias: low complexity; the sequence is PVPAETTAVPQPAQT. Disordered stretches follow at residues 364 to 422 and 508 to 557; these read PVPA…ESTS and SEIP…PVPA. 2 stretches are compositionally biased toward polar residues: residues 379-400 and 520-535; these read NTVA…TTVP and QAVS…TAQG. Low complexity predominate over residues 542-557; sequence SIASASAAPSTIPVPA. Asn-629 carries GPI-anchor amidated asparagine lipidation. The propeptide at 630-651 is removed in mature form; sequence GANRMSVGLSGLIGVMFIAALA.

The protein belongs to the glycosyl hydrolase 16 family.

It is found in the cell membrane. It carries out the reaction Endohydrolysis of (1-&gt;3)- or (1-&gt;4)-linkages in beta-D-glucans when the glucose residue whose reducing group is involved in the linkage to be hydrolyzed is itself substituted at C-3.. Its function is as follows. Mixed-linked glucanase involved in the degradation of complex natural cellulosic substrates. This is Probable endo-1,3(4)-beta-glucanase NFIA_089530 from Neosartorya fischeri (strain ATCC 1020 / DSM 3700 / CBS 544.65 / FGSC A1164 / JCM 1740 / NRRL 181 / WB 181) (Aspergillus fischerianus).